The following is a 711-amino-acid chain: Polyribonucleotide nucleotidyltransferase (711 aa).

Mg(2+) contacts are provided by aspartate 490 and aspartate 496. In terms of domain architecture, KH spans 557–619 (PRIETMTIPK…KCIDDAMRII (63 aa)). The 71-residue stretch at 629-699 (GEVYVGKVRS…KTGKFKLSHK (71 aa)) folds into the S1 motif domain.

This sequence belongs to the polyribonucleotide nucleotidyltransferase family. Mg(2+) serves as cofactor.

It is found in the cytoplasm. It carries out the reaction RNA(n+1) + phosphate = RNA(n) + a ribonucleoside 5'-diphosphate. Its function is as follows. Involved in mRNA degradation. Catalyzes the phosphorolysis of single-stranded polyribonucleotides processively in the 3'- to 5'-direction. The sequence is that of Polyribonucleotide nucleotidyltransferase from Phocaeicola vulgatus (strain ATCC 8482 / DSM 1447 / JCM 5826 / CCUG 4940 / NBRC 14291 / NCTC 11154) (Bacteroides vulgatus).